The chain runs to 625 residues: Probable receptor-like protein kinase At1g11050 (625 aa).

Residues 1–20 form the signal peptide; sequence MPNSILFLLLSFLYLTNCVA. The Extracellular segment spans residues 21–227; that stretch reads QSPSQTCPLD…PLNSKKKRHT (207 aa). 4 N-linked (GlcNAc...) asparagine glycosylation sites follow: asparagine 40, asparagine 106, asparagine 121, and asparagine 177. A helical transmembrane segment spans residues 228 to 248; it reads VALALGITGAIFGALVIAGLI. The Cytoplasmic portion of the chain corresponds to 249–625; it reads CLYFRFGKAV…LQIHSGDMLR (377 aa). Positions 295–555 constitute a Protein kinase domain; the sequence is FSQKNFIGRG…NPKGIMERFL (261 aa). ATP-binding positions include 301-309 and lysine 323; that span reads IGRGGFGFV. The active-site Proton acceptor is the aspartate 426.

It belongs to the protein kinase superfamily. Ser/Thr protein kinase family.

It is found in the membrane. It catalyses the reaction L-seryl-[protein] + ATP = O-phospho-L-seryl-[protein] + ADP + H(+). It carries out the reaction L-threonyl-[protein] + ATP = O-phospho-L-threonyl-[protein] + ADP + H(+). The polypeptide is Probable receptor-like protein kinase At1g11050 (Arabidopsis thaliana (Mouse-ear cress)).